The sequence spans 256 residues: tRNA pseudouridine synthase A 1 (256 aa).

Aspartate 53 (nucleophile) is an active-site residue. Tyrosine 111 provides a ligand contact to substrate.

It belongs to the tRNA pseudouridine synthase TruA family. As to quaternary structure, homodimer.

The catalysed reaction is uridine(38/39/40) in tRNA = pseudouridine(38/39/40) in tRNA. Formation of pseudouridine at positions 38, 39 and 40 in the anticodon stem and loop of transfer RNAs. The sequence is that of tRNA pseudouridine synthase A 1 from Protochlamydia amoebophila (strain UWE25).